The primary structure comprises 701 residues: Pseudouridylate synthase PUS7L (701 aa).

A Phosphoserine modification is found at Ser-79. Asp-339 functions as the Nucleophile in the catalytic mechanism. One can recognise a TRUD domain in the interval 424–647 (GFVNYYGPQR…PGCYRQILKH (224 aa)).

It belongs to the pseudouridine synthase TruD family.

The catalysed reaction is a uridine in mRNA = a pseudouridine in mRNA. In terms of biological role, pseudouridine synthase that catalyzes pseudouridylation of mRNAs. The chain is Pseudouridylate synthase PUS7L from Homo sapiens (Human).